The chain runs to 254 residues: MNIKLLPEVGDLVVVKITEVKNFGANGILEEYPGVEGYIHISEVATGWVKHIRSYLREGQRVVCKVINVNQERKNVDLSLKRVNQHQSREKIAEWKNEQKADKLFEIVCSKLNKDLEACKKEFGVRLVELYGTLFAAFESAAAAEGEWLPDINGDWKDTFVEVAKENITIPEVSVAGYFEAYSLASDGVEKIKEVLTIPPEIGKAELEYVGAPRYRIVVRDKDYKKAEETLKKIVQSVTDKAKKLQVELEFSRQ.

The 72-residue stretch at 10–81 folds into the S1 motif domain; sequence GDLVVVKITE…ERKNVDLSLK (72 aa).

It belongs to the eIF-2-alpha family. In terms of assembly, heterotrimer composed of an alpha, a beta and a gamma chain.

In terms of biological role, eIF-2 functions in the early steps of protein synthesis by forming a ternary complex with GTP and initiator tRNA. The sequence is that of Translation initiation factor 2 subunit alpha from Thermoplasma volcanium (strain ATCC 51530 / DSM 4299 / JCM 9571 / NBRC 15438 / GSS1).